Consider the following 477-residue polypeptide: Bifunctional protein HldE (477 aa).

Residues 1 to 318 (MKVTLPEFER…ENAVRGRAET (318 aa)) form a ribokinase region. At Lys179 the chain carries N6-acetyllysine. Position 195–198 (195–198 (NLSE)) interacts with ATP. Asp264 is a catalytic residue. The interval 344–477 (MTNGVFDILH…IKKIQQDKKG (134 aa)) is cytidylyltransferase.

It in the N-terminal section; belongs to the carbohydrate kinase PfkB family. This sequence in the C-terminal section; belongs to the cytidylyltransferase family. In terms of assembly, homodimer.

The enzyme catalyses D-glycero-beta-D-manno-heptose 7-phosphate + ATP = D-glycero-beta-D-manno-heptose 1,7-bisphosphate + ADP + H(+). It carries out the reaction D-glycero-beta-D-manno-heptose 1-phosphate + ATP + H(+) = ADP-D-glycero-beta-D-manno-heptose + diphosphate. It participates in nucleotide-sugar biosynthesis; ADP-L-glycero-beta-D-manno-heptose biosynthesis; ADP-L-glycero-beta-D-manno-heptose from D-glycero-beta-D-manno-heptose 7-phosphate: step 1/4. The protein operates within nucleotide-sugar biosynthesis; ADP-L-glycero-beta-D-manno-heptose biosynthesis; ADP-L-glycero-beta-D-manno-heptose from D-glycero-beta-D-manno-heptose 7-phosphate: step 3/4. Its function is as follows. Catalyzes the phosphorylation of D-glycero-D-manno-heptose 7-phosphate at the C-1 position to selectively form D-glycero-beta-D-manno-heptose-1,7-bisphosphate. Catalyzes the ADP transfer from ATP to D-glycero-beta-D-manno-heptose 1-phosphate, yielding ADP-D-glycero-beta-D-manno-heptose. This Shigella dysenteriae serotype 1 (strain Sd197) protein is Bifunctional protein HldE.